A 1049-amino-acid chain; its full sequence is RTX-III toxin determinant A from serotype 2 (1049 aa).

A run of 3 helical transmembrane segments spans residues 154–170, 315–331, and 397–413; these read TIIS…LAGI, ALIA…LAFL, and LVGA…TGLI. 6 Hemolysin-type calcium-binding repeats span residues 743–760, 761–778, 779–796, 797–814, 825–842, and 843–860; these read KGSK…DDLL, NGND…NDEL, RGDN…DDKL, LGGN…NDEL, RGGK…SDLL, and DGGE…SDFY.

It belongs to the RTX prokaryotic toxin (TC 1.C.11) family. Post-translationally, palmitoylated by ApxIIIC. The toxin only becomes active when modified.

The protein localises to the secreted. Its subcellular location is the host cell membrane. Does not have hemolytic activity but shows a strong cytotoxicity towards alveolar macrophages and neutrophils. This Actinobacillus pleuropneumoniae (Haemophilus pleuropneumoniae) protein is RTX-III toxin determinant A from serotype 2 (apxIIIA).